The sequence spans 204 residues: uncharacterized protein (204 aa).

It is found in the cytoplasm. The protein resides in the nucleus. This is an uncharacterized protein from Schizosaccharomyces pombe (strain 972 / ATCC 24843) (Fission yeast).